The chain runs to 87 residues: Glutaredoxin (87 aa).

Positions 1–87 (MFKVYGYDSN…GFDQLREYFK (87 aa)) constitute a Glutaredoxin domain. An intrachain disulfide couples C14 to C17.

The protein belongs to the glutaredoxin family.

Serves as a reducing agent for the phage-induced ribonucleotide reductase, but not for the bacterial ones. This specificity may be the result of sequence differences around the redox-active disulfide bond. The oxidized form accepts electrons from bacterial glutathione and will, in turn, reduce other small disulfides. Can also be reduced by NADPH and by bacterial thioredoxin reductase. The chain is Glutaredoxin (NRDC) from Enterobacteria phage T4 (Bacteriophage T4).